A 136-amino-acid chain; its full sequence is Translation initiation factor 5A (136 aa).

Hypusine is present on Lys38.

The protein belongs to the eIF-5A family.

The protein localises to the cytoplasm. In terms of biological role, functions by promoting the formation of the first peptide bond. This Methanopyrus kandleri (strain AV19 / DSM 6324 / JCM 9639 / NBRC 100938) protein is Translation initiation factor 5A.